The sequence spans 638 residues: DNA gyrase subunit B (638 aa).

A Toprim domain is found at 422 to 536; sequence SELYIVEGDS…NGYVYIAQPP (115 aa). Mg(2+)-binding residues include Glu428, Asp501, and Asp503.

This sequence belongs to the type II topoisomerase GyrB family. Heterotetramer, composed of two GyrA and two GyrB chains. In the heterotetramer, GyrA contains the active site tyrosine that forms a transient covalent intermediate with DNA, while GyrB binds cofactors and catalyzes ATP hydrolysis. Mg(2+) is required as a cofactor. Mn(2+) serves as cofactor. It depends on Ca(2+) as a cofactor.

The protein resides in the cytoplasm. It catalyses the reaction ATP-dependent breakage, passage and rejoining of double-stranded DNA.. In terms of biological role, a type II topoisomerase that negatively supercoils closed circular double-stranded (ds) DNA in an ATP-dependent manner to modulate DNA topology and maintain chromosomes in an underwound state. Negative supercoiling favors strand separation, and DNA replication, transcription, recombination and repair, all of which involve strand separation. Also able to catalyze the interconversion of other topological isomers of dsDNA rings, including catenanes and knotted rings. Type II topoisomerases break and join 2 DNA strands simultaneously in an ATP-dependent manner. This Bacillus subtilis (strain 168) protein is DNA gyrase subunit B.